A 498-amino-acid chain; its full sequence is WD repeat-containing protein 55 homolog (498 aa).

Residues 1 to 131 (MHTHNNFKTP…ATFDLDEDDE (131 aa)) are disordered. Composition is skewed to acidic residues over residues 12 to 23 (DEDELDDLDEDM) and 31 to 48 (IEQE…EYDL). Low complexity-rich tracts occupy residues 67–82 (NDSS…NAAD) and 93–103 (AGGVTAGGATS). 6 WD repeats span residues 154-193 (KLED…NKLL), 198-237 (VHSK…LKKL), 241-279 (AHDD…AIFE), 282-321 (ELED…MYVQ), 324-363 (PYEE…YHCD), and 408-447 (QHNM…DFGD). The interval 478-498 (DLTKENADGDDDPGAGPSNMA) is disordered.

Belongs to the WD repeat WDR55 family.

In Drosophila melanogaster (Fruit fly), this protein is WD repeat-containing protein 55 homolog.